We begin with the raw amino-acid sequence, 173 residues long: ATP synthase subunit delta (173 aa).

The protein belongs to the ATPase delta chain family. As to quaternary structure, F-type ATPases have 2 components, F(1) - the catalytic core - and F(0) - the membrane proton channel. F(1) has five subunits: alpha(3), beta(3), gamma(1), delta(1), epsilon(1). F(0) has three main subunits: a(1), b(2) and c(10-14). The alpha and beta chains form an alternating ring which encloses part of the gamma chain. F(1) is attached to F(0) by a central stalk formed by the gamma and epsilon chains, while a peripheral stalk is formed by the delta and b chains.

Its subcellular location is the cell inner membrane. F(1)F(0) ATP synthase produces ATP from ADP in the presence of a proton or sodium gradient. F-type ATPases consist of two structural domains, F(1) containing the extramembraneous catalytic core and F(0) containing the membrane proton channel, linked together by a central stalk and a peripheral stalk. During catalysis, ATP synthesis in the catalytic domain of F(1) is coupled via a rotary mechanism of the central stalk subunits to proton translocation. In terms of biological role, this protein is part of the stalk that links CF(0) to CF(1). It either transmits conformational changes from CF(0) to CF(1) or is implicated in proton conduction. The sequence is that of ATP synthase subunit delta from Campylobacter lari (strain RM2100 / D67 / ATCC BAA-1060).